Consider the following 2324-residue polypeptide: Acetyl-CoA carboxylase (2324 aa).

M1 carries the N-acetylmethionine modification. A disordered region spans residues 1–34; it reads MEESSQPAKPLEMNPHSRFIIGSVSEDNSEDETS. A phosphoserine mark is found at S78 and S80. One can recognise a Biotin carboxylation domain in the interval 117-618; that stretch reads VIEKVLIANN…DTGWLDRLIA (502 aa). An ATP-grasp domain is found at 275–466; the sequence is QKRILNVPQE…LPAAQLQIAM (192 aa). 315–320 serves as a coordination point for ATP; it reads GGGGKG. E424, E437, and N439 together coordinate Mn(2+). R441 is a catalytic residue. The region spanning 745–819 is the Biotinyl-binding domain; sequence FEKENDPSIL…DPGCVIAKLQ (75 aa). K786 is subject to N6-biotinyllysine. Phosphoserine is present on S1193. The 339-residue stretch at 1553-1891 folds into the CoA carboxyltransferase N-terminal domain; sequence PYVTKDLLQS…SVYSPVPILK (339 aa). Positions 1553-2211 are carboxyltransferase; it reads PYVTKDLLQS…EDVVKKKIHD (659 aa). CoA-binding residues include R1800, K2104, and R2106. The CoA carboxyltransferase C-terminal domain maps to 1895-2211; the sequence is PIDRTIDFVP…EDVVKKKIHD (317 aa).

Biotin serves as cofactor. It depends on Mn(2+) as a cofactor.

It localises to the cytoplasm. It catalyses the reaction hydrogencarbonate + acetyl-CoA + ATP = malonyl-CoA + ADP + phosphate + H(+). It carries out the reaction N(6)-biotinyl-L-lysyl-[protein] + hydrogencarbonate + ATP = N(6)-carboxybiotinyl-L-lysyl-[protein] + ADP + phosphate + H(+). It participates in lipid metabolism; malonyl-CoA biosynthesis; malonyl-CoA from acetyl-CoA: step 1/1. Its activity is regulated as follows. By phosphorylation. In terms of biological role, catalyzes the rate-limiting reaction in the biogenesis of long-chain fatty acids. Carries out three functions: biotin carboxyl carrier protein, biotin carboxylase and carboxyltransferase. The protein is Acetyl-CoA carboxylase (ACAC) of Gallus gallus (Chicken).